Here is a 442-residue protein sequence, read N- to C-terminus: UDP-N-acetylmuramoylalanine--D-glutamate ligase (442 aa).

ATP is bound at residue 113 to 119; it reads GSNGKTT.

The protein belongs to the MurCDEF family.

The protein resides in the cytoplasm. It carries out the reaction UDP-N-acetyl-alpha-D-muramoyl-L-alanine + D-glutamate + ATP = UDP-N-acetyl-alpha-D-muramoyl-L-alanyl-D-glutamate + ADP + phosphate + H(+). The protein operates within cell wall biogenesis; peptidoglycan biosynthesis. In terms of biological role, cell wall formation. Catalyzes the addition of glutamate to the nucleotide precursor UDP-N-acetylmuramoyl-L-alanine (UMA). In Coxiella burnetii (strain Dugway 5J108-111), this protein is UDP-N-acetylmuramoylalanine--D-glutamate ligase.